The primary structure comprises 901 residues: MLIPSKLSRPVRLDHTVVRERLLAKLSGANNFRLALITSPAGYGKTTLISQWAAGKNDIGWYSLDEGDNQQERFASYLIAAVQQATNGHCAICETMAQKRQYASLTSLFAQLFIELAEWHSPLYLVIDDYHLITNPVIHESMRFFIRHQPENLTLVVLSRNLPQLGIANLRVRDQLLEIGSQQLAFTHQEAKQFFDCRLSSPIEAAESSRICDDVSGWATALQLIALSARQNTHSAHKSARRLAGINASHLSDYLVDEVLDNVDLATRHFLLKSAILRSMNDALITRVTGEENGQMRLEEIERQGLFLQRMDDTGEWFCYHPLFGNFLRQRCQWELAAELPEIHRAAAESWMAQGFPSEAIHHALAAGDALMLRDILLNHAWSLFNHSELSLLEESLKALPWDSLLENPQLVLLQAWLMQSQHRYGEVNTLLARAEHEIKDIREDTMHAEFNALRAQVAINDGNPDEAERLAKLALEELPPGWFYSRIVATSVLGEVLHCKGELTRSLALMQQTEQMARQHDVWHYALWSLIQQSEILFAQGFLQTAWETQEKAFQLINEQHLEQLPMHEFLVRIRAQLLWAWARLDEAEASARSGIEVLSSYQPQQQLQCLAMLIQCSLARGDLDNARSQLNRLENLLGNGKYHSDWISNANKVRVIYWQMTGDKAAAANWLRHTAKPEFANNHFLQGQWRNIARAQILLGEFEPAEIVLEELNENARSLRLMSDLNRNLLLLNQLYWQAGRKSDAQRVLLDALKLANRTGFISHFVIEGEAMAQQLRQLIQLNTLPELEQHRAQRILREINQHHRHKFAHFDENFVERLLNHPEVPELIRTSPLTQREWQVLGLIYSGYSNEQIAGELEVAATTIKTHIRNLYQKLGVAHRQAAVQHAQKLLKMMGYGV.

39 to 46 lines the ATP pocket; the sequence is SPAGYGKT. The region spanning 829–894 is the HTH luxR-type domain; it reads ELIRTSPLTQ…AAVQHAQKLL (66 aa). Residues 853–872 constitute a DNA-binding region (H-T-H motif); the sequence is NEQIAGELEVAATTIKTHIR.

This sequence belongs to the MalT family. Monomer in solution. Oligomerizes to an active state in the presence of the positive effectors ATP and maltotriose.

With respect to regulation, activated by ATP and maltotriose, which are both required for DNA binding. Its function is as follows. Positively regulates the transcription of the maltose regulon whose gene products are responsible for uptake and catabolism of malto-oligosaccharides. Specifically binds to the promoter region of its target genes, recognizing a short DNA motif called the MalT box. This Escherichia coli O139:H28 (strain E24377A / ETEC) protein is HTH-type transcriptional regulator MalT.